The following is a 158-amino-acid chain: Phospholipase A2 AP-PLA2-II (158 aa).

Positions M1–A16 are cleaved as a signal peptide. Positions Q17–T23 are excised as a propeptide. Disulfide bonds link C51/C158, C53/C69, C68/C138, C75/C131, C85/C124, and C109/C129. The Ca(2+) site is built by G54 and G56. H72 is a catalytic residue. Residue D73 participates in Ca(2+) binding. Residue D132 is part of the active site.

This sequence belongs to the phospholipase A2 family. Group I subfamily. In terms of assembly, monomer. The cofactor is Ca(2+). As to expression, expressed by the venom gland.

The protein localises to the secreted. The catalysed reaction is a 1,2-diacyl-sn-glycero-3-phosphocholine + H2O = a 1-acyl-sn-glycero-3-phosphocholine + a fatty acid + H(+). Its function is as follows. Starfish phospholipase A2 (PLA2) that has hemorrhagic and capillary permeability-increasing activities and hence is considered to be deeply involved in the local inflammation. Shows hemolytic activity only in the presence of phosphatidylcholine (PC). PLA2 catalyzes the calcium-dependent hydrolysis of the 2-acyl groups in 3-sn-phosphoglycerides. The polypeptide is Phospholipase A2 AP-PLA2-II (Acanthaster planci (Crown-of-thorns starfish)).